Consider the following 485-residue polypeptide: Skb1 localization factor 1 (485 aa).

The segment at 1–200 (MSSIIQNPIE…VDDSDLTPHT (200 aa)) is sufficient for interaction with Skb1. Disordered regions lie at residues 117–230 (NAAN…MSRN), 286–416 (ETQH…LRRS), and 446–466 (TTQE…KPEK). A compositionally biased stretch (polar residues) spans 171 to 182 (SRSSRYSKTSDL). Residues 189–198 (RFVDDSDLTP) show a composition bias toward basic and acidic residues. Composition is skewed to polar residues over residues 218–230 (GRSS…MSRN) and 341–363 (VGSS…QQDS). The residue at position 222 (S222) is a Phosphoserine. The segment covering 371–393 (SERSYRRVRDQYLSKPRLSDKNR) has biased composition (basic and acidic residues). Positions 394-416 (YSTFSEFPGQGTPSASQSNLRRS) are enriched in polar residues. The span at 447 to 464 (TQERKPVVKPDSIKTVKP) shows a compositional bias: basic and acidic residues. The required and sufficient for plasma membrane anchoring; lysine-rich, may bind to anionic lipids in the plasma membrane stretch occupies residues 451–485 (KPVVKPDSIKTVKPEKKKSKGFFKKLMHKISHIFD). A Phosphoserine modification is found at S458.

In terms of assembly, interacts with Skb1.

It localises to the cell membrane. Its function is as follows. Acts as a membrane anchor for Skb1 in forming plasma membrane microdomains. Promotes mitotic entry by sequestering mitotic inhibitor Skb1 from its regulatory targets Cdr1 and Wee1. The protein is Skb1 localization factor 1 of Schizosaccharomyces pombe (strain 972 / ATCC 24843) (Fission yeast).